The following is a 102-amino-acid chain: Large ribosomal subunit protein bL21 (102 aa).

This sequence belongs to the bacterial ribosomal protein bL21 family. Part of the 50S ribosomal subunit. Contacts protein L20.

In terms of biological role, this protein binds to 23S rRNA in the presence of protein L20. This chain is Large ribosomal subunit protein bL21, found in Arthrobacter sp. (strain FB24).